We begin with the raw amino-acid sequence, 570 residues long: NADPH oxidase 2 (570 aa).

The Cytoplasmic portion of the chain corresponds to 2–9; it reads GNWAVNEG. A helical transmembrane segment spans residues 10-36; the sequence is LSIFVILVWLGLNVFLFINYYKVYDDG. Residues 37-46 are Extracellular-facing; sequence PKYNYTRKLL. Asn-40 is a glycosylation site (N-linked (GlcNAc...) asparagine). The chain crosses the membrane as a helical span at residues 47–72; it reads GSALALARAPAACLNFNCMLILLPVC. Residues 54–286 form the Ferric oxidoreductase domain; the sequence is RAPAACLNFN…MFLYLCERLV (233 aa). Over 73-95 the chain is Cytoplasmic; the sequence is RNLLSFLRGSSACCSTRIRRQLD. The helical transmembrane segment at 96–130 threads the bilayer; sequence RNLTFHKMVAWMIALHTAIHTIAHLFNVEWCVNAR. Residues His-101 and His-115 each coordinate heme b. Topologically, residues 131 to 163 are extracellular; sequence VGISDRYSIALSDIGDNENEEYLNFAREKIKNP. Glycyl lysine isopeptide (Lys-Gly) (interchain with G-Cter in ubiquitin) cross-links involve residues Lys-159 and Lys-161. A helical membrane pass occupies residues 164-194; sequence EGGLYVAVTRLAGITGIVITLCLILIITSST. The Cytoplasmic portion of the chain corresponds to 195–203; the sequence is KTIRRSYFE. FAD contacts are provided by Arg-199 and Ser-200. The helical transmembrane segment at 204-222 threads the bilayer; it reads VFWYTHHLFVIFFIGLAIH. Residues Trp-206, His-209, His-222, Arg-226, and Ile-227 each contribute to the heme b site. Residues 223 to 267 are Extracellular-facing; sequence GAERIVRGQTAESLEEHNLDICADKIEEWGKIKECPVPKFAGNPP. Lys-255 is covalently cross-linked (Glycyl lysine isopeptide (Lys-Gly) (interchain with G-Cter in ubiquitin)). The heme b site is built by Met-268, Tyr-280, and Arg-287. The helical transmembrane segment at 268 to 285 threads the bilayer; the sequence is MTWKWIVGPMFLYLCERL. The Cytoplasmic portion of the chain corresponds to 286–570; sequence VRFWRSQQKV…VHFIFNKENF (285 aa). Residues 287–397 form the FAD-binding FR-type domain; it reads RFWRSQQKVV…DGPFGTASED (111 aa). Residues Lys-294, Lys-299, Lys-306, Lys-328, and Lys-334 each participate in a glycyl lysine isopeptide (Lys-Gly) (interchain with G-Cter in ubiquitin) cross-link. FAD contacts are provided by Trp-337, His-338, Pro-339, Thr-341, His-354, Arg-356, Trp-361, and Thr-362. Lys-381 participates in a covalent cross-link: Glycyl lysine isopeptide (Lys-Gly) (interchain with G-Cter in ubiquitin). 3 residues coordinate NADPH: Ile-411, Arg-446, and Thr-481. Lys-506 participates in a covalent cross-link: Glycyl lysine isopeptide (Lys-Gly) (interchain with G-Cter in ubiquitin). Arg-513 is a binding site for NADPH. A Glycyl lysine isopeptide (Lys-Gly) (interchain with G-Cter in ubiquitin) cross-link involves residue Lys-567.

As to quaternary structure, component of the phagocyte NADPH oxidase core complex/cytochrome b558 complex, composed of CYBB (heavy chain (beta)) and CYBA (light chain (alpha)). Component of the phagocyte NADPH oxidase complex composed of an obligatory core heterodimer formed by the membrane proteins CYBA and CYBB and the cytosolic regulatory subunits NCF1/p47-phox, NCF2/p67-phox, NCF4/p40-phox and the small GTPase RAC1 or RAC2. Interacts with NCF1 (phosphorylated form). Interacts with NCF2; the interaction is enhanced in the presence of GBP7. Interacts with RAC2. Interacts with RAC1. Interacts with calprotectin (S100A8/9). Interacts with NRROS; the interaction is direct and impairs formation of a stable NADPH oxidase complex. Interacts with CYBC1; CYBC1 may act as a chaperone stabilizing Cytochrome b-245 heterodimer. The CYBA:CYBB complex interacts with GBP7. FAD is required as a cofactor. Glycosylated. In terms of processing, phosphorylated on Ser and Thr residues by PKC during neutrophils activation. Phosphorylation enhances the NADPH oxidase activity and stimulates its interaction with RAC2, NCF2/p67-phox, and NCF1/p47-phox. Post-translationally, undergoes 'Lys-48'-linked polyubiquitination, likely by RNF145, triggering endoplasmic reticulum-associated degradation.

The protein localises to the cell membrane. It carries out the reaction NADPH + 2 O2 = 2 superoxide + NADP(+) + H(+). Catalytic subunit of the phagocyte NADPH oxidase complex that mediates the transfer of electrons from cytosolic NADPH to O2 to produce the superoxide anion (O2(-)). In the activated complex, electrons are first transferred from NADPH to flavin adenine dinucleotide (FAD) and subsequently transferred via two heme molecules to molecular oxygen, producing superoxide through an outer-sphere reaction. Activation of the NADPH oxidase complex is initiated by the assembly of cytosolic subunits of the NADPH oxidase complex with the core NADPH oxidase complex to form a complex at the plasma membrane or phagosomal membrane. This activation process is initiated by phosphorylation dependent binding of the cytosolic NCF1/p47-phox subunit to the C-terminus of CYBA/p22-phox. NADPH oxidase complex assembly is impaired through interaction with NRROS. The chain is NADPH oxidase 2 from Mus musculus (Mouse).